The chain runs to 1888 residues: Fatty acid synthase subunit alpha (1888 aa).

Residues 98–118 (DLAPVEEPNAEEQTGAAATPA) are disordered. The region spanning 146 to 221 (VKASLLLHVL…ETFQDTFAGS (76 aa)) is the Carrier domain. Ser-181 bears the O-(pantetheine 4'-phosphoryl)serine mark. The beta-ketoacyl reductase stretch occupies residues 675–874 (DKYVLITGAG…CGAIIGWTRG (200 aa)). The Ketosynthase family 3 (KS3) domain occupies 1119–1657 (KQMIQEVVIE…QKGAQAVAVH (539 aa)). Residues Cys-1305, His-1542, and His-1583 each act as for beta-ketoacyl synthase activity in the active site. Mg(2+) is bound by residues Asp-1774, Val-1775, and Glu-1776. Acetyl-CoA-binding positions include 1774-1776 (DVE), Tyr-1800, Ser-1810, 1819-1829 (EAVFKSLGVKS), 1843-1846 (REAG), and 1873-1875 (ISH). Residues Ser-1874 and His-1875 each contribute to the Mg(2+) site.

It belongs to the thiolase-like superfamily. Fungal fatty acid synthetase subunit alpha family. As to quaternary structure, fatty acid synthase is composed of alpha and beta subunits.

It catalyses the reaction acetyl-CoA + n malonyl-CoA + 2n NADPH + 4n H(+) = a long-chain-acyl-CoA + n CoA + n CO2 + 2n NADP(+).. The catalysed reaction is a fatty acyl-[ACP] + malonyl-[ACP] + H(+) = a 3-oxoacyl-[ACP] + holo-[ACP] + CO2. The enzyme catalyses a (3R)-hydroxyacyl-[ACP] + NADP(+) = a 3-oxoacyl-[ACP] + NADPH + H(+). Fatty acid synthetase catalyzes the formation of long-chain fatty acids from acetyl-CoA, malonyl-CoA and NADPH. The alpha subunit contains domains for: acyl carrier protein, 3-oxoacyl-[acyl-carrier-protein] reductase, and 3-oxoacyl-[acyl-carrier-protein] synthase. In this species, higher amounts of C18 than C16 fatty acids are produced. This is Fatty acid synthase subunit alpha (FAS2) from Lachancea kluyveri (Yeast).